The primary structure comprises 518 residues: Phosphoacetylglucosamine mutase 1 (518 aa).

At Thr49 the chain carries Phosphothreonine. Catalysis depends on Ser51, which acts as the Phosphoserine intermediate. Mg(2+) is bound by residues Ser51, Asp267, Asp269, and Asp271. A Phosphoserine modification is found at Ser51. Substrate is bound by residues 360 to 362 (EAN), 486 to 490 (RASGT), and Arg495.

It belongs to the phosphohexose mutase family. It depends on Mg(2+) as a cofactor.

It localises to the cytoplasm. The protein resides in the nucleus. The enzyme catalyses N-acetyl-alpha-D-glucosamine 1-phosphate = N-acetyl-D-glucosamine 6-phosphate. It functions in the pathway nucleotide-sugar biosynthesis; UDP-N-acetyl-alpha-D-glucosamine biosynthesis; N-acetyl-alpha-D-glucosamine 1-phosphate from alpha-D-glucosamine 6-phosphate (route I): step 2/2. Catalyzes the conversion of GlcNAc-6-P into GlcNAc-1-P during the synthesis of uridine diphosphate/UDP-GlcNAc, which is a biosynthetic precursor of chitin and also supplies the amino sugars for N-linked oligosaccharides of glycoproteins. The protein is Phosphoacetylglucosamine mutase 1 of Schizosaccharomyces pombe (strain 972 / ATCC 24843) (Fission yeast).